A 216-amino-acid polypeptide reads, in one-letter code: Somatotropin (216 aa).

A signal peptide spans 1-26 (MAAGPRNSMLLVFALLSLPWPQEVGA). Residue H45 participates in Zn(2+) binding. C78 and C189 are disulfide-bonded. S131 bears the Phosphoserine mark. Residue E198 coordinates Zn(2+). A disulfide bond links C206 and C214.

Belongs to the somatotropin/prolactin family.

It is found in the secreted. In terms of biological role, plays an important role in growth control. Its major role in stimulating body growth is to stimulate the liver and other tissues to secrete IGF1. It stimulates both the differentiation and proliferation of myoblasts. It also stimulates amino acid uptake and protein synthesis in muscle and other tissues. The polypeptide is Somatotropin (GH1) (Neovison vison (American mink)).